The chain runs to 395 residues: Sulfate adenylyltransferase (395 aa).

It belongs to the sulfate adenylyltransferase family.

The enzyme catalyses sulfate + ATP + H(+) = adenosine 5'-phosphosulfate + diphosphate. The protein operates within sulfur metabolism; hydrogen sulfide biosynthesis; sulfite from sulfate: step 1/3. The chain is Sulfate adenylyltransferase from Synechococcus elongatus (strain ATCC 33912 / PCC 7942 / FACHB-805) (Anacystis nidulans R2).